Here is a 117-residue protein sequence, read N- to C-terminus: Large ribosomal subunit protein bL20 (117 aa).

Belongs to the bacterial ribosomal protein bL20 family.

Its function is as follows. Binds directly to 23S ribosomal RNA and is necessary for the in vitro assembly process of the 50S ribosomal subunit. It is not involved in the protein synthesizing functions of that subunit. This is Large ribosomal subunit protein bL20 from Aliivibrio fischeri (strain ATCC 700601 / ES114) (Vibrio fischeri).